We begin with the raw amino-acid sequence, 366 residues long: 3-isopropylmalate dehydrogenase (366 aa).

An NAD(+)-binding site is contributed by 78 to 91 (GPQWTHLKGSESPE). Residues arginine 99, arginine 109, arginine 138, and aspartate 227 each contribute to the substrate site. Mg(2+) is bound by residues aspartate 227, aspartate 251, and aspartate 255. Residue 285–297 (GSAPDIAEKNIAN) participates in NAD(+) binding.

This sequence belongs to the isocitrate and isopropylmalate dehydrogenases family. LeuB type 1 subfamily. Homodimer. Mg(2+) is required as a cofactor. Mn(2+) serves as cofactor.

Its subcellular location is the cytoplasm. It catalyses the reaction (2R,3S)-3-isopropylmalate + NAD(+) = 4-methyl-2-oxopentanoate + CO2 + NADH. It participates in amino-acid biosynthesis; L-leucine biosynthesis; L-leucine from 3-methyl-2-oxobutanoate: step 3/4. In terms of biological role, catalyzes the oxidation of 3-carboxy-2-hydroxy-4-methylpentanoate (3-isopropylmalate) to 3-carboxy-4-methyl-2-oxopentanoate. The product decarboxylates to 4-methyl-2 oxopentanoate. The polypeptide is 3-isopropylmalate dehydrogenase (Blochmanniella pennsylvanica (strain BPEN)).